The chain runs to 403 residues: S-adenosylmethionine synthase (403 aa).

Residue histidine 15 coordinates ATP. Residue aspartate 17 coordinates Mg(2+). Glutamate 43 contributes to the K(+) binding site. 2 residues coordinate L-methionine: glutamate 56 and glutamine 99. A flexible loop region spans residues 99 to 109; it reads QSPDINQGVDR. ATP contacts are provided by residues 166–168, 232–233, aspartate 241, 247–248, alanine 264, and lysine 268; these read DAK, KF, and RK. Residue aspartate 241 coordinates L-methionine. Lysine 272 is an L-methionine binding site.

It belongs to the AdoMet synthase family. In terms of assembly, homotetramer; dimer of dimers. Mg(2+) serves as cofactor. K(+) is required as a cofactor.

It localises to the cytoplasm. The enzyme catalyses L-methionine + ATP + H2O = S-adenosyl-L-methionine + phosphate + diphosphate. The protein operates within amino-acid biosynthesis; S-adenosyl-L-methionine biosynthesis; S-adenosyl-L-methionine from L-methionine: step 1/1. Its function is as follows. Catalyzes the formation of S-adenosylmethionine (AdoMet) from methionine and ATP. The overall synthetic reaction is composed of two sequential steps, AdoMet formation and the subsequent tripolyphosphate hydrolysis which occurs prior to release of AdoMet from the enzyme. The polypeptide is S-adenosylmethionine synthase (Xanthomonas campestris pv. campestris (strain 8004)).